A 255-amino-acid chain; its full sequence is Hydroxyacylglutathione hydrolase (255 aa).

Positions 55, 57, 59, 60, 113, 132, and 170 each coordinate Zn(2+).

The protein belongs to the metallo-beta-lactamase superfamily. Glyoxalase II family. Monomer. Requires Zn(2+) as cofactor.

It carries out the reaction an S-(2-hydroxyacyl)glutathione + H2O = a 2-hydroxy carboxylate + glutathione + H(+). Its pathway is secondary metabolite metabolism; methylglyoxal degradation; (R)-lactate from methylglyoxal: step 2/2. Thiolesterase that catalyzes the hydrolysis of S-D-lactoyl-glutathione to form glutathione and D-lactic acid. This chain is Hydroxyacylglutathione hydrolase, found in Methylobacterium nodulans (strain LMG 21967 / CNCM I-2342 / ORS 2060).